A 93-amino-acid polypeptide reads, in one-letter code: Cobalt transport protein CbiN (93 aa).

2 consecutive transmembrane segments (helical) span residues 5–25 (LILL…DHGG) and 62–82 (SLLF…ILGY).

Belongs to the CbiN family. In terms of assembly, forms an energy-coupling factor (ECF) transporter complex composed of an ATP-binding protein (A component, CbiO), a transmembrane protein (T component, CbiQ) and 2 possible substrate-capture proteins (S components, CbiM and CbiN) of unknown stoichimetry.

It localises to the cell inner membrane. It participates in cofactor biosynthesis; adenosylcobalamin biosynthesis. Its function is as follows. Part of the energy-coupling factor (ECF) transporter complex CbiMNOQ involved in cobalt import. This is Cobalt transport protein CbiN from Citrobacter koseri (strain ATCC BAA-895 / CDC 4225-83 / SGSC4696).